A 355-amino-acid polypeptide reads, in one-letter code: NADH dehydrogenase [ubiquinone] 1 alpha subcomplex subunit 10, mitochondrial (355 aa).

Residues Met1 to Lys35 constitute a mitochondrion transit peptide. A Phosphoserine; by PINK1 modification is found at Ser250. Lys285 carries the post-translational modification N6-succinyllysine.

The protein belongs to the complex I NDUFA10 subunit family. In terms of assembly, complex I is composed of 45 different subunits. This a component of the hydrophobic protein fraction. Requires FAD as cofactor. Post-translationally, phosphorylation at Ser-250 by PINK1 is required for the binding and/or reduction of the complex I substrate ubiquinone.

It is found in the mitochondrion matrix. In terms of biological role, accessory subunit of the mitochondrial membrane respiratory chain NADH dehydrogenase (Complex I), that is believed not to be involved in catalysis. Complex I functions in the transfer of electrons from NADH to the respiratory chain. The immediate electron acceptor for the enzyme is believed to be ubiquinone. The protein is NADH dehydrogenase [ubiquinone] 1 alpha subcomplex subunit 10, mitochondrial (NDUFA10) of Homo sapiens (Human).